The following is a 515-amino-acid chain: GMP synthase [glutamine-hydrolyzing] (515 aa).

The region spanning 6 to 198 is the Glutamine amidotransferase type-1 domain; that stretch reads KVIIIDYGSQ…LFHVAKLKAD (193 aa). Cys-83 acts as the Nucleophile in catalysis. Active-site residues include His-172 and Glu-174. The GMPS ATP-PPase domain occupies 199 to 390; sequence WTMSSFVERA…LGLPDFIIWR (192 aa). ATP is bound at residue 226-232; sequence SGGIDST.

As to quaternary structure, homodimer.

The catalysed reaction is XMP + L-glutamine + ATP + H2O = GMP + L-glutamate + AMP + diphosphate + 2 H(+). It participates in purine metabolism; GMP biosynthesis; GMP from XMP (L-Gln route): step 1/1. Functionally, catalyzes the synthesis of GMP from XMP. The sequence is that of GMP synthase [glutamine-hydrolyzing] from Nitratidesulfovibrio vulgaris (strain DSM 19637 / Miyazaki F) (Desulfovibrio vulgaris).